The following is a 560-amino-acid chain: Membrane protein insertase YidC (560 aa).

6 consecutive transmembrane segments (helical) span residues 5–25 (IINLVAAIILSLSIIFGWQYF), 334–354 (AIDFGWFYIITKPVFYAMNFF), 357–377 (YVGNFGVSILIVTVIIKLLMF), 431–451 (LPILVQIPVFFSIYKVLYVTI), 476–496 (LFGLLPFSPPSFLMIGAWPIL), and 522–542 (FMPLIFLFMFSSFPVGLLIYW).

Belongs to the OXA1/ALB3/YidC family. Type 1 subfamily. Interacts with the Sec translocase complex via SecD. Specifically interacts with transmembrane segments of nascent integral membrane proteins during membrane integration.

Its subcellular location is the cell inner membrane. Functionally, required for the insertion and/or proper folding and/or complex formation of integral membrane proteins into the membrane. Involved in integration of membrane proteins that insert both dependently and independently of the Sec translocase complex, as well as at least some lipoproteins. Aids folding of multispanning membrane proteins. The chain is Membrane protein insertase YidC from Rickettsia massiliae (strain Mtu5).